Here is a 108-residue protein sequence, read N- to C-terminus: MTTQANVRMTVGTLLGTVNEAATTVADTFGTATKAVGMLNRYVTKQADKQIIRDKLEMHEFTNKLIEETAMQEAIRQKQILDFCKDEQNKELFSNAYDRLSKILADSK.

This is an uncharacterized protein from Escherichia coli (Bacteriophage N4).